The primary structure comprises 271 residues: MSKIQTTFQRLQAQGRKALIPFITAGDPDPTLTVPLMHALVAGGADIIELGVPFSDPMADGPTIQRASERALAQGMTLRKVLQAVREFRSGDADTPVVLMGYANPIEAMGQQAFVAAAREAGVDGALVVDYPPEECVEFAAASKAAGLDPIFLLAPTSSEQRFADVARAGSGYIYYVSLKGVTGAGTLDLDEVARRIPQIRAAVGMPVGVGFGIRDAESARRIGAVADAVVIGSRIIEEIERSPREQACSNVTHFVKGIREALDTLPGVKQ.

Residues Glu-49 and Asp-60 each act as proton acceptor in the active site.

The protein belongs to the TrpA family. Tetramer of two alpha and two beta chains.

The catalysed reaction is (1S,2R)-1-C-(indol-3-yl)glycerol 3-phosphate + L-serine = D-glyceraldehyde 3-phosphate + L-tryptophan + H2O. The protein operates within amino-acid biosynthesis; L-tryptophan biosynthesis; L-tryptophan from chorismate: step 5/5. Its function is as follows. The alpha subunit is responsible for the aldol cleavage of indoleglycerol phosphate to indole and glyceraldehyde 3-phosphate. This Azoarcus sp. (strain BH72) protein is Tryptophan synthase alpha chain.